A 495-amino-acid polypeptide reads, in one-letter code: Protein YhjJ (495 aa).

Residues 1–24 (MQGTKIRLLAGSLLMLASAGYVQA) form the signal peptide.

Belongs to the peptidase M16 family.

It localises to the periplasm. The sequence is that of Protein YhjJ (yhjJ) from Salmonella typhimurium (strain LT2 / SGSC1412 / ATCC 700720).